The following is a 1816-amino-acid chain: Laminin subunit alpha-4 (1816 aa).

A signal peptide spans 1 to 24; that stretch reads MGWSTAWCSVLALWLLWCAVCSNA. O-linked (Xyl...) (chondroitin sulfate) serine glycosylation occurs at Ser39. Disulfide bonds link Cys82–Cys91, Cys84–Cys98, Cys101–Cys110, Cys113–Cys129, Cys132–Cys146, Cys134–Cys155, Cys157–Cys166, Cys169–Cys184, Cys187–Cys202, Cys189–Cys209, Cys212–Cys221, and Cys224–Cys238. Laminin EGF-like domains are found at residues 82-131, 132-186, and 187-240; these read CDCN…FCQP, CPCP…TCKK, and CDCS…NCAV. Residue Asn104 is glycosylated (N-linked (GlcNAc...) asparagine). N-linked (GlcNAc...) asparagine glycosylation occurs at Asn215. In terms of domain architecture, Laminin EGF-like 4; truncated spans 241 to 255; that stretch reads CNCGGGPCDSVTGEC. Positions 256–825 are domain II and I; that stretch reads LEEGFEVPTG…AQTRSVASKI (570 aa). Asn308, Asn333, Asn458, Asn550, Asn571, Asn574, Asn631, and Asn639 each carry an N-linked (GlcNAc...) asparagine glycan. The stretch at 431 to 523 forms a coiled coil; it reads THRELVDEEA…ERVKEQMEVV (93 aa). Residues 556–604 are a coiled coil; the sequence is AEIDGAKNELQGKLSNLSNLSHDLVQEATDHAYNLQQEADELSRNLHSS. Residues 655–717 are a coiled coil; the sequence is IIYHKDESDN…AVKQLQAAER (63 aa). Positions 717–719 match the Cell attachment site motif; that stretch reads RGD. Asn735, Asn751, Asn754, Asn780, and Asn803 each carry an N-linked (GlcNAc...) asparagine glycan. A coiled-coil region spans residues 770-799; the sequence is AVDSARDAVRNLTEVVPQLLDQLRTVEQKR. Laminin G-like domains lie at 826–1030, 1042–1222, and 1229–1397; these read QVSM…SVPC, AASY…GYGC, and SRRA…LYEC. Cys1000 and Cys1030 are oxidised to a cystine. N-linked (GlcNAc...) asparagine glycosylation is present at Asn1088. A disulfide bridge links Cys1196 with Cys1222. Asn1283 and Asn1361 each carry an N-linked (GlcNAc...) asparagine glycan. A disulfide bridge links Cys1365 with Cys1397. Residues 1409–1419 show a composition bias toward basic residues; sequence KKGKNSSKPKT. The segment at 1409 to 1433 is disordered; sequence KKGKNSSKPKTNKQGEKSKDAPSWD. Basic and acidic residues predominate over residues 1421 to 1430; the sequence is KQGEKSKDAP. 2 consecutive Laminin G-like domains span residues 1462-1633 and 1640-1813; these read AYQY…VTPC and TGTY…INSC. 2 disulfide bridges follow: Cys1610-Cys1633 and Cys1785-Cys1813.

As to quaternary structure, laminin is a complex glycoprotein, consisting of three different polypeptide chains (alpha, beta, gamma), which are bound to each other by disulfide bonds into a cross-shaped molecule comprising one long and three short arms with globules at each end. Alpha-4 is a subunit of laminin-8 (laminin-411), laminin-9 (laminin-421) and laminin-14 (laminin-423). In terms of tissue distribution, strongly expressed in peripheral nerves, cardiac muscle, fat, dermis, lung stroma, aortic endothelium, endocardium and endothelium of blood vessels in skin and brain.

The protein localises to the secreted. Its subcellular location is the extracellular space. The protein resides in the extracellular matrix. It is found in the basement membrane. Binding to cells via a high affinity receptor, laminin is thought to mediate the attachment, migration and organization of cells into tissues during embryonic development by interacting with other extracellular matrix components. The protein is Laminin subunit alpha-4 (Lama4) of Mus musculus (Mouse).